We begin with the raw amino-acid sequence, 20 residues long: Cytochrome c oxidase subunit 6A2, mitochondrial (20 aa).

Positions 1–20 (ASGAKGDHGGAGASTXXLLT) are disordered.

The protein belongs to the cytochrome c oxidase subunit 6A family. In terms of assembly, component of the cytochrome c oxidase (complex IV, CIV), a multisubunit enzyme composed of 14 subunits. The complex is composed of a catalytic core of 3 subunits MT-CO1, MT-CO2 and MT-CO3, encoded in the mitochondrial DNA, and 11 supernumerary subunits COX4I, COX5A, COX5B, COX6A, COX6B, COX6C, COX7A, COX7B, COX7C, COX8 and NDUFA4, which are encoded in the nuclear genome. The complex exists as a monomer or a dimer and forms supercomplexes (SCs) in the inner mitochondrial membrane with NADH-ubiquinone oxidoreductase (complex I, CI) and ubiquinol-cytochrome c oxidoreductase (cytochrome b-c1 complex, complex III, CIII), resulting in different assemblies (supercomplex SCI(1)III(2)IV(1) and megacomplex MCI(2)III(2)IV(2)). In terms of tissue distribution, heart specific isoform.

The protein resides in the mitochondrion inner membrane. Its pathway is energy metabolism; oxidative phosphorylation. In terms of biological role, component of the cytochrome c oxidase, the last enzyme in the mitochondrial electron transport chain which drives oxidative phosphorylation. The respiratory chain contains 3 multisubunit complexes succinate dehydrogenase (complex II, CII), ubiquinol-cytochrome c oxidoreductase (cytochrome b-c1 complex, complex III, CIII) and cytochrome c oxidase (complex IV, CIV), that cooperate to transfer electrons derived from NADH and succinate to molecular oxygen, creating an electrochemical gradient over the inner membrane that drives transmembrane transport and the ATP synthase. Cytochrome c oxidase is the component of the respiratory chain that catalyzes the reduction of oxygen to water. Electrons originating from reduced cytochrome c in the intermembrane space (IMS) are transferred via the dinuclear copper A center (CU(A)) of subunit 2 and heme A of subunit 1 to the active site in subunit 1, a binuclear center (BNC) formed by heme A3 and copper B (CU(B)). The BNC reduces molecular oxygen to 2 water molecules unsing 4 electrons from cytochrome c in the IMS and 4 protons from the mitochondrial matrix. Plays a role in the assembly and stabilization of complex IV. The polypeptide is Cytochrome c oxidase subunit 6A2, mitochondrial (COX6A2) (Canis lupus familiaris (Dog)).